Reading from the N-terminus, the 186-residue chain is Biphenyl dioxygenase subunit beta (186 aa).

It belongs to the bacterial ring-hydroxylating dioxygenase beta subunit family. In terms of assembly, heterohexamer consisting of 3 BphA subunits and 3 BphE subunits. A ferredoxin (BphF) and a ferredoxin reductase (BphG) must be present to obtain activity.

The catalysed reaction is biphenyl + NADH + O2 + H(+) = (2R,3S)-3-phenylcyclohexa-3,5-diene-1,2-diol + NAD(+). It participates in xenobiotic degradation; biphenyl degradation; 2-hydroxy-2,4-pentadienoate and benzoate from biphenyl: step 1/4. The beta subunit may be responsible for the substrate specificity of the enzyme. This Comamonas testosteroni (Pseudomonas testosteroni) protein is Biphenyl dioxygenase subunit beta (bphE).